A 343-amino-acid polypeptide reads, in one-letter code: Phosphoribosylformylglycinamidine cyclo-ligase (343 aa).

Belongs to the AIR synthase family.

It localises to the cytoplasm. The catalysed reaction is 2-formamido-N(1)-(5-O-phospho-beta-D-ribosyl)acetamidine + ATP = 5-amino-1-(5-phospho-beta-D-ribosyl)imidazole + ADP + phosphate + H(+). It functions in the pathway purine metabolism; IMP biosynthesis via de novo pathway; 5-amino-1-(5-phospho-D-ribosyl)imidazole from N(2)-formyl-N(1)-(5-phospho-D-ribosyl)glycinamide: step 2/2. The sequence is that of Phosphoribosylformylglycinamidine cyclo-ligase from Rippkaea orientalis (strain PCC 8801 / RF-1) (Cyanothece sp. (strain PCC 8801)).